Here is a 364-residue protein sequence, read N- to C-terminus: Cell cycle control protein 50A (364 aa).

The disordered stretch occupies residues 1–28; that stretch reads MAMNYSAKDEVDGGPAGPPGGAAKTRRP. N-acetylalanine is present on alanine 2. Over 2-49 the chain is Cytoplasmic; that stretch reads AMNYSAKDEVDGGPAGPPGGAAKTRRPDNTAFKQQRLPAWQPILTAGT. The chain crosses the membrane as a helical span at residues 50–70; sequence VLPTFFIIGLIFIPIGIGIFV. The Exoplasmic loop segment spans residues 71–328; the sequence is TSNNIREIEI…SWMGGKNPFL (258 aa). 3 disulfide bridges follow: cysteine 91-cysteine 104, cysteine 94-cysteine 102, and cysteine 157-cysteine 171. N-linked (GlcNAc...) asparagine glycosylation is present at asparagine 98. N-linked (GlcNAc...) asparagine glycosylation occurs at asparagine 297. The helical transmembrane segment at 329–349 threads the bilayer; the sequence is GIAYITIGSISFLLGVVLLVI. At 350 to 364 the chain is on the cytoplasmic side; that stretch reads NHKYRNSSNTADITI.

The protein belongs to the CDC50/LEM3 family. As to quaternary structure, component of various P4-ATPase flippase complexes which consists of a catalytic alpha subunit and an accessory beta subunit. Interacts with ATP8A1 to form a flippase complex; this complex forms an intermediate phosphoenzyme. The ATP8A2:TMEM30A flippase complex has been purified, and ATP8B1:TMEM30A and ATP8B2:TMEM30A flippase complexes have been shown to form intermediate phosphoenzymes in vitro. Interacts with alpha subunits ATP8A1, ATP8B1, ATP8B2, ATP8B4, ATP10A, ATP10B, ATP10D, ATP11A, ATP11B and ATP11C. N-glycosylated. Contains high mannose-type oligosaccharides. As to expression, expressed in photoreceptor cells; detected in retina outer segment (at protein level). Detected in hepatocytes liver sinusoidal endothelial cells and kidney brush border of the proximal tubules (at protein level). Expressed in brain (at protein level).

The protein localises to the membrane. It is found in the cell membrane. Its subcellular location is the golgi apparatus. The protein resides in the cytoplasmic vesicle. It localises to the secretory vesicle membrane. The protein localises to the apical cell membrane. In terms of biological role, accessory component of a P4-ATPase flippase complex which catalyzes the hydrolysis of ATP coupled to the transport of aminophospholipids from the outer to the inner leaflet of various membranes and ensures the maintenance of asymmetric distribution of phospholipids. Phospholipid translocation also seems to be implicated in vesicle formation and in uptake of lipid signaling molecules. The beta subunit may assist in binding of the phospholipid substrate. Required for the proper folding, assembly and ER to Golgi exit of the ATP8A2:TMEM30A flippase complex. ATP8A2:TMEM30A may be involved in regulation of neurite outgrowth, and, reconstituted to liposomes, predomiminantly transports phosphatidylserine (PS) and to a lesser extent phosphatidylethanolamine (PE). The ATP8A1:TMEM30A flippase complex seems to play a role in regulation of cell migration probably involving flippase-mediated translocation of phosphatidylethanolamine (PE) at the plasma membrane. Required for the formation of the ATP8A2, ATP8B1 and ATP8B2 P-type ATPAse intermediate phosphoenzymes. Involved in uptake of platelet-activating factor (PAF). Can also mediate the export of alpha subunits ATP8A1, ATP8B1, ATP8B2, ATP8B4, ATP10A, ATP10B, ATP10D, ATP11A, ATP11B and ATP11C from the ER to other membrane localizations. The chain is Cell cycle control protein 50A from Mus musculus (Mouse).